The following is a 460-amino-acid chain: Proton extrusion protein PxcA (460 aa).

Disordered regions lie at residues 82 to 128 (FSRL…QRRD) and 143 to 190 (SRYK…GSGN). Polar residues predominate over residues 90-102 (QNGSGPTSAQDKA). Residues 107-120 (AAEANVSESSSENS) show a composition bias toward low complexity. Over residues 151–163 (KSQPISASISTSP) the composition is skewed to polar residues. The segment covering 171–184 (QPTSTQPSSSNVSV) has biased composition (low complexity). A run of 4 helical transmembrane segments spans residues 242–262 (FLLL…NFLF), 337–357 (GLKN…LIFV), 373–393 (IYGL…DVFV), and 420–440 (FIYG…KYWI).

This sequence belongs to the CemA family.

The protein localises to the cell inner membrane. Functionally, required for H(+) efflux immediately after light irradiation to form a rapid H(+) concentration gradient across the thylakoid membranes. Together with PxcL, contributes to transient H(+) uptake following dark to light transition. This Synechococcus sp. (strain JA-2-3B'a(2-13)) (Cyanobacteria bacterium Yellowstone B-Prime) protein is Proton extrusion protein PxcA.